Consider the following 468-residue polypeptide: Citrate synthase, mitochondrial (468 aa).

A mitochondrion-targeting transit peptide spans 1-30 (MSFLSISRLAPRLLSSKNAACVVVAARNAS). Residues His303 and His349 contribute to the active site. Arg358 contacts oxaloacetate. The active site involves Asp404. Oxaloacetate-binding residues include Arg430 and Arg450.

The protein belongs to the citrate synthase family. In terms of assembly, homodimer.

The protein resides in the mitochondrion matrix. It carries out the reaction oxaloacetate + acetyl-CoA + H2O = citrate + CoA + H(+). The protein operates within carbohydrate metabolism; tricarboxylic acid cycle; isocitrate from oxaloacetate: step 1/2. In terms of biological role, key enzyme of the Krebs tricarboxylic acid cycle which catalyzes the synthesis of citrate from acetyl coenzyme A and oxaloacetate. This is Citrate synthase, mitochondrial (cs) from Danio rerio (Zebrafish).